Reading from the N-terminus, the 304-residue chain is Coenzyme PQQ synthesis protein B (304 aa).

Belongs to the PqqB family.

Its pathway is cofactor biosynthesis; pyrroloquinoline quinone biosynthesis. Its function is as follows. May be involved in the transport of PQQ or its precursor to the periplasm. The protein is Coenzyme PQQ synthesis protein B of Pseudomonas paraeruginosa (strain DSM 24068 / PA7) (Pseudomonas aeruginosa (strain PA7)).